The primary structure comprises 53 residues: ATP synthase protein 8 (53 aa).

The helical transmembrane segment at methionine 4–cysteine 24 threads the bilayer.

Belongs to the ATPase protein 8 family. F-type ATPases have 2 components, CF(1) - the catalytic core - and CF(0) - the membrane proton channel.

The protein localises to the mitochondrion membrane. Functionally, mitochondrial membrane ATP synthase (F(1)F(0) ATP synthase or Complex V) produces ATP from ADP in the presence of a proton gradient across the membrane which is generated by electron transport complexes of the respiratory chain. F-type ATPases consist of two structural domains, F(1) - containing the extramembraneous catalytic core and F(0) - containing the membrane proton channel, linked together by a central stalk and a peripheral stalk. During catalysis, ATP synthesis in the catalytic domain of F(1) is coupled via a rotary mechanism of the central stalk subunits to proton translocation. Part of the complex F(0) domain. Minor subunit located with subunit a in the membrane. In Drosophila sechellia (Fruit fly), this protein is ATP synthase protein 8 (mt:ATPase8).